A 769-amino-acid polypeptide reads, in one-letter code: Ligand-dependent nuclear receptor-interacting factor 1 (769 aa).

Glycyl lysine isopeptide (Lys-Gly) (interchain with G-Cter in SUMO2) cross-links involve residues lysine 259 and lysine 279. Residues glutamine 378–proline 387 show a composition bias toward polar residues. Residues glutamine 378 to serine 400 form a disordered region. Phosphoserine is present on residues serine 402, serine 430, and serine 436. Lysine 446 participates in a covalent cross-link: Glycyl lysine isopeptide (Lys-Gly) (interchain with G-Cter in SUMO2). Position 502 is a phosphoserine (serine 502). A disordered region spans residues aspartate 528–leucine 562. The PxVxL motif motif lies at leucine 580–leucine 584. Serine 599 carries the post-translational modification Phosphoserine. Residue lysine 605 forms a Glycyl lysine isopeptide (Lys-Gly) (interchain with G-Cter in SUMO2) linkage. 2 consecutive short sequence motifs (nuclear localization signal) follow at residues lysine 628 to lysine 631 and lysine 642 to lysine 645. Lysine 702 is covalently cross-linked (Glycyl lysine isopeptide (Lys-Gly) (interchain with G-Cter in SUMO2)). The residue at position 732 (threonine 732) is a Phosphothreonine. Positions isoleucine 740–lysine 769 form a coiled coil.

It belongs to the LRIF1 family. As to quaternary structure, interacts with RARA. Interacts with SMCHD1; leading to recruitment to inactivated chromosome X in females. Interacts (via PxVxL motif) with HP1 (CBX1/HP1-beta, CBX3/HP1-gamma and CBX5/HP1-alpha). Widely expressed, with the highest expression levels in heart, liver and placenta.

The protein resides in the chromosome. The protein localises to the nucleus matrix. Its function is as follows. Together with SMCHD1, involved in chromosome X inactivation in females by promoting the compaction of heterochromatin. Also able to repress the ligand-induced transcriptional activity of retinoic acid receptor alpha (RARA), possibly through direct recruitment of histone deacetylases. Also required for silencing of the DUX4 locus in somatic cells. This Homo sapiens (Human) protein is Ligand-dependent nuclear receptor-interacting factor 1.